A 157-amino-acid polypeptide reads, in one-letter code: Protein Smg homolog (157 aa).

It belongs to the Smg family.

This chain is Protein Smg homolog, found in Aliivibrio salmonicida (strain LFI1238) (Vibrio salmonicida (strain LFI1238)).